Here is a 432-residue protein sequence, read N- to C-terminus: Serine/threonine-protein kinase Sgk1 (432 aa).

The disordered stretch occupies residues 67–93; the sequence is PELMNANPSPPPSPSQQINLGPSSNPH. A compositionally biased stretch (polar residues) spans 82 to 92; that stretch reads QQINLGPSSNP. The Protein kinase domain occupies 99 to 356; the sequence is FHFLKVIGKG…FTEIKNHIFF (258 aa). ATP is bound by residues 105-113 and Lys128; that span reads IGKGSFGKV. The active-site Proton acceptor is Asp223. The AGC-kinase C-terminal domain maps to 357–432; that stretch reads SPINWDDLIN…SYAPPVDSFL (76 aa).

The protein belongs to the protein kinase superfamily. AGC Ser/Thr protein kinase family.

It is found in the cytoplasm. The protein localises to the nucleus. The protein resides in the endoplasmic reticulum. It carries out the reaction L-seryl-[protein] + ATP = O-phospho-L-seryl-[protein] + ADP + H(+). It catalyses the reaction L-threonyl-[protein] + ATP = O-phospho-L-threonyl-[protein] + ADP + H(+). Its function is as follows. Protein kinase that may play an important role in cellular stress response. May be involved in the regulation of processes such as cell survival, neuronal excitability and renal sodium excretion. This chain is Serine/threonine-protein kinase Sgk1 (SGK1), found in Gallus gallus (Chicken).